Reading from the N-terminus, the 129-residue chain is KVYGRCELAAAMKRLGLDNYRGYSLGNWVCAAKYESNFNTHATNRNTDGSTDYGILQINSRWWCNDGKTPGSRNLCHIPCSALLSSDITASVNCAKKIVSDGNGMNAWVAWRNRCKGTDVSVWTRGCRL.

The region spanning Lys1–Leu129 is the C-type lysozyme domain. 4 disulfides stabilise this stretch: Cys6–Cys127, Cys30–Cys115, Cys64–Cys80, and Cys76–Cys94. Catalysis depends on residues Glu35 and Asp52.

This sequence belongs to the glycosyl hydrolase 22 family. As to quaternary structure, monomer.

The protein localises to the secreted. It carries out the reaction Hydrolysis of (1-&gt;4)-beta-linkages between N-acetylmuramic acid and N-acetyl-D-glucosamine residues in a peptidoglycan and between N-acetyl-D-glucosamine residues in chitodextrins.. In terms of biological role, lysozymes have primarily a bacteriolytic function; those in tissues and body fluids are associated with the monocyte-macrophage system and enhance the activity of immunoagents. The chain is Lysozyme C (LYZ) from Lophura leucomelanos (Kalij pheasant).